The following is a 331-amino-acid chain: Phosphate acyltransferase (331 aa).

This sequence belongs to the PlsX family. In terms of assembly, homodimer. Probably interacts with PlsY.

It localises to the cytoplasm. It carries out the reaction a fatty acyl-[ACP] + phosphate = an acyl phosphate + holo-[ACP]. Its pathway is lipid metabolism; phospholipid metabolism. Its function is as follows. Catalyzes the reversible formation of acyl-phosphate (acyl-PO(4)) from acyl-[acyl-carrier-protein] (acyl-ACP). This enzyme utilizes acyl-ACP as fatty acyl donor, but not acyl-CoA. The sequence is that of Phosphate acyltransferase from Ureaplasma parvum serovar 3 (strain ATCC 27815 / 27 / NCTC 11736).